The following is a 944-amino-acid chain: Protein translocase subunit SecA (944 aa).

ATP is bound by residues Gln87, 105–109 (GEGKT), and Asp494. Residues 894 to 944 (HAAAAGDGEEKPRPKQETVVRTQPKVGRNDPCPCGSGKKYKKCHGATEAAV) are disordered. The span at 901–911 (GEEKPRPKQET) shows a compositional bias: basic and acidic residues. Residues Cys925, Cys927, Cys936, and His937 each coordinate Zn(2+).

It belongs to the SecA family. Monomer and homodimer. Part of the essential Sec protein translocation apparatus which comprises SecA, SecYEG and auxiliary proteins SecDF-YajC and YidC. Zn(2+) is required as a cofactor.

It localises to the cell inner membrane. It is found in the cytoplasm. The enzyme catalyses ATP + H2O + cellular proteinSide 1 = ADP + phosphate + cellular proteinSide 2.. In terms of biological role, part of the Sec protein translocase complex. Interacts with the SecYEG preprotein conducting channel. Has a central role in coupling the hydrolysis of ATP to the transfer of proteins into and across the cell membrane, serving as an ATP-driven molecular motor driving the stepwise translocation of polypeptide chains across the membrane. The protein is Protein translocase subunit SecA of Anaeromyxobacter sp. (strain Fw109-5).